We begin with the raw amino-acid sequence, 423 residues long: Gamma-glutamyl phosphate reductase (423 aa).

It belongs to the gamma-glutamyl phosphate reductase family.

Its subcellular location is the cytoplasm. It carries out the reaction L-glutamate 5-semialdehyde + phosphate + NADP(+) = L-glutamyl 5-phosphate + NADPH + H(+). The protein operates within amino-acid biosynthesis; L-proline biosynthesis; L-glutamate 5-semialdehyde from L-glutamate: step 2/2. Its function is as follows. Catalyzes the NADPH-dependent reduction of L-glutamate 5-phosphate into L-glutamate 5-semialdehyde and phosphate. The product spontaneously undergoes cyclization to form 1-pyrroline-5-carboxylate. In Desulfovibrio desulfuricans (strain ATCC 27774 / DSM 6949 / MB), this protein is Gamma-glutamyl phosphate reductase.